The chain runs to 535 residues: CTP synthase (535 aa).

The segment at 1–267 is amidoligase domain; it reads MTKYIFVTGG…DQIVCDHLKL (267 aa). Ser13 is a binding site for CTP. Ser13 is a binding site for UTP. 14–19 is an ATP binding site; that stretch reads SLGKGI. Residue Tyr54 coordinates L-glutamine. ATP is bound at residue Asp71. Residues Asp71 and Glu141 each coordinate Mg(2+). Residues 148-150, 188-193, and Lys224 each bind CTP; these read DIE and KTKPTQ. UTP-binding positions include 188-193 and Lys224; that span reads KTKPTQ. 240-242 is an ATP binding site; the sequence is RDA. Positions 292–534 constitute a Glutamine amidotransferase type-1 domain; it reads KIALVGKYVE…VRASITNKES (243 aa). Position 354 (Gly354) interacts with L-glutamine. Residue Cys381 is the Nucleophile; for glutamine hydrolysis of the active site. Residues 382 to 385, Glu405, and Arg462 each bind L-glutamine; that span reads LGMQ. Active-site residues include His507 and Glu509.

The protein belongs to the CTP synthase family. As to quaternary structure, homotetramer.

The enzyme catalyses UTP + L-glutamine + ATP + H2O = CTP + L-glutamate + ADP + phosphate + 2 H(+). The catalysed reaction is L-glutamine + H2O = L-glutamate + NH4(+). It carries out the reaction UTP + NH4(+) + ATP = CTP + ADP + phosphate + 2 H(+). The protein operates within pyrimidine metabolism; CTP biosynthesis via de novo pathway; CTP from UDP: step 2/2. Allosterically activated by GTP, when glutamine is the substrate; GTP has no effect on the reaction when ammonia is the substrate. The allosteric effector GTP functions by stabilizing the protein conformation that binds the tetrahedral intermediate(s) formed during glutamine hydrolysis. Inhibited by the product CTP, via allosteric rather than competitive inhibition. Functionally, catalyzes the ATP-dependent amination of UTP to CTP with either L-glutamine or ammonia as the source of nitrogen. Regulates intracellular CTP levels through interactions with the four ribonucleotide triphosphates. This Bacillus cereus (strain G9842) protein is CTP synthase.